The primary structure comprises 296 residues: NAD kinase (296 aa).

D73 serves as the catalytic Proton acceptor. Residues 73 to 74 (DG), K78, 151 to 152 (NE), R178, D180, and 191 to 196 (TAHAMS) contribute to the NAD(+) site.

The protein belongs to the NAD kinase family. Requires a divalent metal cation as cofactor.

It localises to the cytoplasm. The enzyme catalyses NAD(+) + ATP = ADP + NADP(+) + H(+). Involved in the regulation of the intracellular balance of NAD and NADP, and is a key enzyme in the biosynthesis of NADP. Catalyzes specifically the phosphorylation on 2'-hydroxyl of the adenosine moiety of NAD to yield NADP. The protein is NAD kinase of Francisella tularensis subsp. mediasiatica (strain FSC147).